Here is a 192-residue protein sequence, read N- to C-terminus: MPNWGGGKKCGVCQKAVYFAEEVQCEGSSFHKSCFLCMVCKKNLDSTTVAVHGDEIYCKSCYGKKYGPKGYGYGMGAGTLSTDKGESLGIKYEEGQSHRPTNPNASRMAQKVGGSDGCPRCGQAVYAAEKVIGAGKSWHKSCFRCAKCGKSLESTTLADKDGEIYCKGCYAKNFGPKGFGFGQGAGALIHSQ.

The region spanning 10-61 (CGVCQKAVYFAEEVQCEGSSFHKSCFLCMVCKKNLDSTTVAVHGDEIYCKSC) is the LIM zinc-binding 1 domain. The Nuclear localization signal signature appears at 64-69 (KKYGPK). In terms of domain architecture, LIM zinc-binding 2 spans 118–169 (CPRCGQAVYAAEKVIGAGKSWHKSCFRCAKCGKSLESTTLADKDGEIYCKGC).

Probable monomer. Interacts with ZYX. Most prominent in tissues that are enriched in smooth muscle cells, such as gizzard, stomach, and intestine. Lower level in the heart, no expression in liver, skeletal muscle, or brain.

Its subcellular location is the nucleus. The protein resides in the cytoplasm. It is found in the cytoskeleton. Functionally, heat stable protein, that interacts with zyxin/ZYX. May be a component of a signal transduction pathway that mediates adhesion-stimulated changes in gene expression. The polypeptide is Cysteine and glycine-rich protein 1 (CSRP1) (Gallus gallus (Chicken)).